The chain runs to 470 residues: Neuraminidase (470 aa).

The Intravirion portion of the chain corresponds to 1 to 14 (MNPNQKIIAIGSAS). The tract at residues 11 to 32 (GSASLGILILNVILHVVSIIVT) is involved in apical transport and lipid raft association. Residues 15-35 (LGILILNVILHVVSIIVTVLV) form a helical membrane-spanning segment. Residues 32–86 (TVLVLNNNGTGLNCNRTIIREYNETVRVERITQWYNTSTIEYIERPSNEYYMNNT) are hypervariable stalk region. Residues 36–470 (LNNNGTGLNC…AILPFDIDKM (435 aa)) lie on the Virion surface side of the membrane. N-linked (GlcNAc...) asparagine; by host glycosylation is found at Asn39, Asn46, Asn54, Asn67, and Asn84. The tract at residues 89-470 (LCEAQGFAPF…AILPFDIDKM (382 aa)) is head of neuraminidase. 8 disulfide bridges follow: Cys90–Cys417, Cys122–Cys127, Cys182–Cys229, Cys231–Cys236, Cys277–Cys290, Cys279–Cys288, Cys316–Cys335, and Cys421–Cys446. Substrate is bound at residue Arg116. Asn144 carries an N-linked (GlcNAc...) asparagine; by host glycan. The active-site Proton donor/acceptor is the Asp149. Arg150 contributes to the substrate binding site. 275–276 (EE) contacts substrate. A substrate-binding site is contributed by Arg291. Ca(2+) is bound at residue Asp292. Asn293 is a glycosylation site (N-linked (GlcNAc...) asparagine; by host). Gly296 and Asp322 together coordinate Ca(2+). Arg368 is a binding site for substrate. Asn398 carries an N-linked (GlcNAc...) asparagine; by host glycan. Tyr402 (nucleophile) is an active-site residue.

Belongs to the glycosyl hydrolase 34 family. In terms of assembly, homotetramer. Requires Ca(2+) as cofactor. Post-translationally, N-glycosylated.

The protein resides in the virion membrane. It localises to the host apical cell membrane. The catalysed reaction is Hydrolysis of alpha-(2-&gt;3)-, alpha-(2-&gt;6)-, alpha-(2-&gt;8)- glycosidic linkages of terminal sialic acid residues in oligosaccharides, glycoproteins, glycolipids, colominic acid and synthetic substrates.. With respect to regulation, inhibited by the neuraminidase inhibitors zanamivir (Relenza) and oseltamivir (Tamiflu). These drugs interfere with the release of progeny virus from infected cells and are effective against all influenza strains. Resistance to neuraminidase inhibitors is quite rare. Catalyzes the removal of terminal sialic acid residues from viral and cellular glycoconjugates. Cleaves off the terminal sialic acids on the glycosylated HA during virus budding to facilitate virus release. Additionally helps virus spread through the circulation by further removing sialic acids from the cell surface. These cleavages prevent self-aggregation and ensure the efficient spread of the progeny virus from cell to cell. Otherwise, infection would be limited to one round of replication. Described as a receptor-destroying enzyme because it cleaves a terminal sialic acid from the cellular receptors. May facilitate viral invasion of the upper airways by cleaving the sialic acid moieties on the mucin of the airway epithelial cells. Likely to plays a role in the budding process through its association with lipid rafts during intracellular transport. May additionally display a raft-association independent effect on budding. Plays a role in the determination of host range restriction on replication and virulence. Sialidase activity in late endosome/lysosome traffic seems to enhance virus replication. This is Neuraminidase from Aves (Horse).